A 346-amino-acid polypeptide reads, in one-letter code: Protein tas (346 aa).

The active-site Proton donor is the Tyr-53. 234–244 contributes to the NADP(+) binding site; it reads SCLGFGTLTGK.

Belongs to the aldo/keto reductase family. Aldo/keto reductase 2 subfamily.

This chain is Protein tas (tas), found in Escherichia coli (strain K12).